Here is a 653-residue protein sequence, read N- to C-terminus: Large subunit GTPase 1 homolog (653 aa).

The segment at 1–47 (MGKKRGTGLGRSLQRQRGSERRGASSWLHASEVVGESGPERRSAVEQ) is disordered. Residues 155–439 (WRQLWRVIER…LCDCPGLVMP (285 aa)) enclose the CP-type G domain. 203–206 (NKAD) contributes to the GTP binding site. The segment covering 248–275 (ADSVADDLSDSEEESSSQEEDVTAEDSA) has biased composition (acidic residues). Residues 248 to 323 (ADSVADDLSD…TCSEDEGGDK (76 aa)) form a disordered region. A compositionally biased stretch (polar residues) spans 276 to 291 (ESTSTGSALQTENQCL). Residues 293–320 (SDDDSSDEYEDCEDEEEDDWQTCSEDEG) are compositionally biased toward acidic residues. GTP-binding positions include 388–395 (GYPNVGKS) and 432–435 (DCPG). The tract at residues 621–653 (APSAGSVVGKPWKKHGNRNKKEKVRRITKHLEN) is disordered. The segment covering 631–653 (PWKKHGNRNKKEKVRRITKHLEN) has biased composition (basic residues).

Belongs to the TRAFAC class YlqF/YawG GTPase family. LSG1 subfamily.

The protein localises to the cytoplasm. The protein resides in the endoplasmic reticulum. It is found in the nucleus. It localises to the cajal body. It catalyses the reaction GTP + H2O = GDP + phosphate + H(+). Its function is as follows. GTPase required for the XPO1/CRM1-mediated nuclear export of the 60S ribosomal subunit. Probably acts by mediating the release of NMD3 from the 60S ribosomal subunit after export into the cytoplasm. Functionally, functions as a GTPase. May act by mediating the release of NMD3 from the 60S ribosomal subunit after export into the cytoplasm during the 60S ribosomal subunit maturation. The sequence is that of Large subunit GTPase 1 homolog from Gallus gallus (Chicken).